A 557-amino-acid chain; its full sequence is Small ribosomal subunit protein bS1 (557 aa).

S1 motif domains lie at Gly-21–Glu-87, Ala-105–Arg-171, Gly-192–Lys-260, and Gly-277–Lys-347. N6-acetyllysine is present on residues Lys-229, Lys-279, and Lys-363. S1 motif domains follow at residues Gly-364–Lys-434 and Gly-451–Arg-520.

It belongs to the bacterial ribosomal protein bS1 family. In terms of assembly, part of the 30S ribosomal subunit. Some nascent polypeptide chains are able to cross-link to this protein in situ. Can be cross-linked to mRNA in the ribosome. Post-translationally, phosphorylated; probably on a serine.

In terms of biological role, required for translation of most natural mRNAs except for leaderless mRNA. Binds mRNA upstream of the Shine-Dalgarno (SD) sequence and helps it bind to the 30S ribosomal subunit; acts as an RNA chaperone to unfold structured mRNA on the ribosome but is not essential for mRNAs with strong SDs and little 5'-UTR structure, thus it may help fine-tune which mRNAs that are translated. Unwinds dsRNA by binding to transiently formed ssRNA regions; binds about 10 nucleotides. Has a preference for polypyrimidine tracts. Negatively autoregulates its own translation. The chain is Small ribosomal subunit protein bS1 (rpsA) from Escherichia coli O157:H7.